We begin with the raw amino-acid sequence, 144 residues long: Effector EagT6 (144 aa).

As to quaternary structure, homodimer. Two dimers interact with Tse6; this interaction is crucial for Tse6 loading onto VgrG1a.

Functionally, plays an essential role in toxin Tse6 delivery to target cells and specifically in the loading of Tse6 onto VgrG1a. The sequence is that of Effector EagT6 from Pseudomonas aeruginosa (strain ATCC 15692 / DSM 22644 / CIP 104116 / JCM 14847 / LMG 12228 / 1C / PRS 101 / PAO1).